The sequence spans 154 residues: Aspartate carbamoyltransferase regulatory chain (154 aa).

The Zn(2+) site is built by Cys-109, Cys-114, Cys-138, and Cys-141.

The protein belongs to the PyrI family. In terms of assembly, contains catalytic and regulatory chains. The cofactor is Zn(2+).

In terms of biological role, involved in allosteric regulation of aspartate carbamoyltransferase. In Yersinia enterocolitica serotype O:8 / biotype 1B (strain NCTC 13174 / 8081), this protein is Aspartate carbamoyltransferase regulatory chain.